Consider the following 676-residue polypeptide: Protein timeless (676 aa).

The tract at residues 77–108 (VNTLQKLLNLWFEASLSESSEDNESNTSPPKK) is necessary for normal circadian rhythm. Disordered regions lie at residues 94–145 (ESSE…CDER) and 346–398 (PESI…LVKR). 2 stretches are compositionally biased toward low complexity: residues 101-129 (SNTSPPKKGSGDSSPMLTSDPTSDSSDNG) and 360-369 (QGKPQHQKPP). The Nuclear localization signal motif lies at 388 to 398 (KELRRKKLVKR).

Belongs to the timeless family. As to quaternary structure, forms a heterodimer with period (PER); the complex then translocates into the nucleus. Phosphorylated with a circadian rhythmicity.

Its subcellular location is the nucleus. The protein resides in the cytoplasm. It is found in the perinuclear region. Its function is as follows. Required for the production of circadian rhythms. The biological cycle depends on the rhythmic formation and nuclear localization of the TIM-PER complex. Light induces the degradation of TIM, which promotes elimination of PER. Nuclear activity of the heterodimer coordinatively regulates PER and TIM transcription through a negative feedback loop. Behaves as a negative element in circadian transcriptional loop. Does not appear to bind DNA, suggesting indirect transcriptional inhibition. In Drosophila hydei (Fruit fly), this protein is Protein timeless (tim).